Consider the following 325-residue polypeptide: ATP phosphoribosyltransferase (325 aa).

Belongs to the ATP phosphoribosyltransferase family. Long subfamily. Mg(2+) is required as a cofactor.

Its subcellular location is the cytoplasm. The catalysed reaction is 1-(5-phospho-beta-D-ribosyl)-ATP + diphosphate = 5-phospho-alpha-D-ribose 1-diphosphate + ATP. Its pathway is amino-acid biosynthesis; L-histidine biosynthesis; L-histidine from 5-phospho-alpha-D-ribose 1-diphosphate: step 1/9. Feedback inhibited by histidine. Its function is as follows. Catalyzes the condensation of ATP and 5-phosphoribose 1-diphosphate to form N'-(5'-phosphoribosyl)-ATP (PR-ATP). Has a crucial role in the pathway because the rate of histidine biosynthesis seems to be controlled primarily by regulation of HisG enzymatic activity. The polypeptide is ATP phosphoribosyltransferase (Afipia carboxidovorans (strain ATCC 49405 / DSM 1227 / KCTC 32145 / OM5) (Oligotropha carboxidovorans)).